Reading from the N-terminus, the 131-residue chain is Increased copper sensitivity protein 3 (131 aa).

Helical transmembrane passes span 35–55 (ISVL…IFFS) and 74–94 (IALT…IIAF).

It localises to the membrane. The chain is Increased copper sensitivity protein 3 (ICS3) from Saccharomyces cerevisiae (strain ATCC 204508 / S288c) (Baker's yeast).